The sequence spans 121 residues: Large ribosomal subunit protein bL19 (121 aa).

This sequence belongs to the bacterial ribosomal protein bL19 family.

This protein is located at the 30S-50S ribosomal subunit interface and may play a role in the structure and function of the aminoacyl-tRNA binding site. This is Large ribosomal subunit protein bL19 from Porphyromonas gingivalis (strain ATCC BAA-308 / W83).